Consider the following 313-residue polypeptide: Carbamate kinase 2 (313 aa).

It belongs to the carbamate kinase family.

The protein resides in the cytoplasm. It catalyses the reaction hydrogencarbonate + NH4(+) + ATP = carbamoyl phosphate + ADP + H2O + H(+). It participates in metabolic intermediate metabolism; carbamoyl phosphate degradation; CO(2) and NH(3) from carbamoyl phosphate: step 1/1. In Staphylococcus aureus (strain USA300), this protein is Carbamate kinase 2 (arcC2).